The following is a 504-amino-acid chain: Heat shock 70 kDa protein 14 (504 aa).

This sequence belongs to the heat shock protein 70 family. In terms of assembly, component of ribosome-associated complex (RAC).

The protein resides in the cytoplasm. It is found in the cytosol. In terms of biological role, component of the ribosome-associated complex (RAC), a complex involved in folding or maintaining nascent polypeptides in a folding-competent state. This is Heat shock 70 kDa protein 14 (hspa14) from Danio rerio (Zebrafish).